Consider the following 246-residue polypeptide: 1-(5-phosphoribosyl)-5-[(5-phosphoribosylamino)methylideneamino] imidazole-4-carboxamide isomerase (246 aa).

Catalysis depends on D12, which acts as the Proton acceptor. The active-site Proton donor is D134.

The protein belongs to the HisA/HisF family.

The protein localises to the cytoplasm. It carries out the reaction 1-(5-phospho-beta-D-ribosyl)-5-[(5-phospho-beta-D-ribosylamino)methylideneamino]imidazole-4-carboxamide = 5-[(5-phospho-1-deoxy-D-ribulos-1-ylimino)methylamino]-1-(5-phospho-beta-D-ribosyl)imidazole-4-carboxamide. It participates in amino-acid biosynthesis; L-histidine biosynthesis; L-histidine from 5-phospho-alpha-D-ribose 1-diphosphate: step 4/9. The chain is 1-(5-phosphoribosyl)-5-[(5-phosphoribosylamino)methylideneamino] imidazole-4-carboxamide isomerase from Haloarcula marismortui (strain ATCC 43049 / DSM 3752 / JCM 8966 / VKM B-1809) (Halobacterium marismortui).